A 193-amino-acid chain; its full sequence is Non-canonical purine NTP pyrophosphatase homolog (193 aa).

The protein belongs to the HAM1 NTPase family.

In Halalkalibacterium halodurans (strain ATCC BAA-125 / DSM 18197 / FERM 7344 / JCM 9153 / C-125) (Bacillus halodurans), this protein is Non-canonical purine NTP pyrophosphatase homolog.